Reading from the N-terminus, the 446-residue chain is RUN domain-containing protein 3A (446 aa).

Residues 1-298 (METSFVQTTM…LQLQLEEAAA (298 aa)) are interaction with RAP2A. The RUN domain occupies 52–189 (DDSSEEFVNF…IDFSFCLKGE (138 aa)). Residue threonine 215 is modified to Phosphothreonine. The tract at residues 216 to 239 (DEEERHSAESSTSEDNSPEHPYLP) is disordered. A Phosphoserine modification is found at serine 232. Positions 267 to 322 (YLEELVRLRESQLKDLEAENRRLQLQLEEAAAQNQREKRELEGVILELQEQLTGLI) form a coiled coil. Over residues 372–384 (PLSAEASLSSDSQ) the composition is skewed to polar residues. A disordered region spans residues 372–404 (PLSAEASLSSDSQRLGEGTRDEEPWGPIGKDPT). Serine 416 and serine 419 each carry phosphoserine.

The protein belongs to the RUNDC3 family. In terms of assembly, interacts with the GTP-bound form of RAP2A.

May act as an effector of RAP2A in neuronal cells. This Pongo abelii (Sumatran orangutan) protein is RUN domain-containing protein 3A (RUNDC3A).